We begin with the raw amino-acid sequence, 327 residues long: Pumilio homolog 18 (327 aa).

Positions 1 to 324 constitute a PUM-HD domain; it reads MAVADNPFSM…NIANILDSFR (324 aa). 6 Pumilio repeats span residues 79–114, 115–149, 150–185, 186–222, 223–260, and 261–295; these read SDSDYFMSIVTTKFGSRRVQKLLGKSDDVDAFFCAA, ILRRFLHITTDKYASYVTIRAMVVFDKVMKKALYE, RILYHALDLACDQHGCIALNDIITDADDPYYRDQLL, ELVASNALRLSNDASGNFVVQHVLTLYDSRCIHNIAV, NLYGQCIELSFKKYGSYIVEKLLEVEESMVVVVVELLG, and CDGDRLMRLARNEFGNFVVVKALRFTKMSRMDLFW.

Its subcellular location is the cytoplasm. Functionally, sequence-specific RNA-binding protein that regulates translation and mRNA stability by binding the 3'-UTR of target mRNAs. The polypeptide is Pumilio homolog 18 (APUM18) (Arabidopsis thaliana (Mouse-ear cress)).